A 362-amino-acid polypeptide reads, in one-letter code: Adenosine deaminase (362 aa).

2 residues coordinate Zn(2+): histidine 41 and histidine 43. 43–45 (HLD) is an a purine D-ribonucleoside binding site. The segment at 169–183 (IGETGISEESLRKAA) is gating helix loop; regulates binding affinity for substrates and thus substrate selectivity. Residue glycine 200 coordinates a purine D-ribonucleoside. Histidine 225 is a binding site for Zn(2+). Residues glutamate 228, histidine 252, and aspartate 309 each coordinate a purine D-ribonucleoside. Aspartate 309 contacts Zn(2+).

It belongs to the metallo-dependent hydrolases superfamily. Adenosine and AMP deaminases family. Requires Zn(2+) as cofactor.

The catalysed reaction is adenosine + H2O + H(+) = inosine + NH4(+). It functions in the pathway purine metabolism; purine nucleoside salvage. Inhibited by coformycin but not by methylthiocoformycin (MT-coformycin). In terms of biological role, catalyzes the hydrolytic deamination of adenosine to produce inosine. Unlike other Plasmodium adenosine deaminases, does not catalyze the deamination of 5'-methylthioadenosine (MTA). Plays an essential role in the purine salvage pathway which allows the parasite to use host cell purines for the synthesis of nucleic acids. This Plasmodium gallinaceum protein is Adenosine deaminase.